We begin with the raw amino-acid sequence, 1429 residues long: uncharacterized protein (1429 aa).

2 disordered regions span residues 1-76 (MEGE…SGIE) and 103-130 (PAGAAESAQNANLISSKSENVPEPAGEK). Over residues 14 to 29 (SHSTSVVSERASSSGV) the composition is skewed to low complexity. A compositionally biased stretch (polar residues) spans 109–121 (SAQNANLISSKSE). The next 2 helical transmembrane spans lie at 197–217 (LTGQWWQSTSILLAVSILSWI) and 225–245 (FFILFFIIITGTIVYGSCMIS). The SMP-LTD domain occupies 266-471 (DYETMSWFNT…WPNMFDYDLS (206 aa)). 2 C2 domains span residues 462–584 (WPNM…GDIY) and 738–858 (TPVD…DRSA). Positions 899–932 (NTDNSSKQSSENVQSATDPTTPAKDNSTSNAETS) are disordered. A C2 3 domain is found at 1060 to 1177 (TYMPVPMTLN…EPNVESQQSI (118 aa)). The interval 1280-1303 (EKNPSRSDLTTTQEASSSASVPPA) is disordered. Residues 1294-1303 (ASSSASVPPA) are compositionally biased toward low complexity.

The protein localises to the membrane. This is an uncharacterized protein from Schizosaccharomyces pombe (strain 972 / ATCC 24843) (Fission yeast).